Consider the following 283-residue polypeptide: Elongation factor Ts (283 aa).

The interval 79–82 (TDFV) is involved in Mg(2+) ion dislocation from EF-Tu.

The protein belongs to the EF-Ts family.

It is found in the cytoplasm. Associates with the EF-Tu.GDP complex and induces the exchange of GDP to GTP. It remains bound to the aminoacyl-tRNA.EF-Tu.GTP complex up to the GTP hydrolysis stage on the ribosome. The sequence is that of Elongation factor Ts from Shewanella frigidimarina (strain NCIMB 400).